The chain runs to 192 residues: Small ribosomal subunit protein bS16 (192 aa).

A compositionally biased stretch (basic and acidic residues) spans 149 to 161 (EKKAAEAKAKAEA). Residues 149 to 192 (EKKAAEAKAKAEAEAAAAAEEATETEETPMEAAAEEAPAAESAE) are disordered. Over residues 178–192 (MEAAAEEAPAAESAE) the composition is skewed to low complexity.

Belongs to the bacterial ribosomal protein bS16 family.

This is Small ribosomal subunit protein bS16 from Porphyromonas gingivalis (strain ATCC 33277 / DSM 20709 / CIP 103683 / JCM 12257 / NCTC 11834 / 2561).